A 670-amino-acid polypeptide reads, in one-letter code: Zinc finger and BTB domain-containing protein 5 (670 aa).

One can recognise a BTB domain in the interval 24–93 (CDCVIVVGNR…MYTSTLMLGE (70 aa)). Disordered regions lie at residues 158 to 256 (LSSS…QEDG) and 268 to 382 (EDAQ…SSTD). Residues 170–181 (PMSSSMRSSLDQ) are compositionally biased toward polar residues. Ser-234 bears the Phosphoserine mark. A Glycyl lysine isopeptide (Lys-Gly) (interchain with G-Cter in SUMO2) cross-link involves residue Lys-239. Polar residues predominate over residues 285–295 (SRATQVETSFE). Residues Lys-317 and Lys-325 each participate in a glycyl lysine isopeptide (Lys-Gly) (interchain with G-Cter in SUMO2) cross-link. Low complexity predominate over residues 345–360 (AEGSESVEVEGVVVSA). A compositionally biased stretch (basic and acidic residues) spans 361-374 (EKIDLSPESSDRSF). Position 366 is a phosphoserine (Ser-366). Glycyl lysine isopeptide (Lys-Gly) (interchain with G-Cter in SUMO2) cross-links involve residues Lys-399 and Lys-410. Residues 414 to 432 (SNFSASQSTDDNLPNTTSD) are compositionally biased toward polar residues. Disordered stretches follow at residues 414–433 (SNFS…TSDC) and 442–470 (LLSP…EPAD). The segment covering 444–459 (SPEAGPAGGPSSAPGS) has biased composition (low complexity). Residues Lys-535, Lys-587, and Lys-590 each participate in a glycyl lysine isopeptide (Lys-Gly) (interchain with G-Cter in SUMO2) cross-link. Residues 606 to 628 (YACKICCKTFLTLTDCKKHIRVH) form a C2H2-type 1 zinc finger. Residues 634 to 657 (YACLKCGKRFSQSSHLYKHSKTTC) form a C2H2-type 2; atypical zinc finger. Glycyl lysine isopeptide (Lys-Gly) (interchain with G-Cter in SUMO2) cross-links involve residues Lys-638 and Lys-651.

Its subcellular location is the nucleus. In terms of biological role, may be involved in transcriptional regulation. This chain is Zinc finger and BTB domain-containing protein 5 (Zbtb5), found in Mus musculus (Mouse).